Reading from the N-terminus, the 1664-residue chain is Cortactin-binding protein 2 (1664 aa).

4 disordered regions span residues 1–23 (MATD…AGAA), 268–440 (QLKR…ALHP), 455–479 (GNAN…SPTS), and 495–618 (QALS…KPSI). Residues 119 to 276 (RKMQERMSTQ…EQLKRGSDSK (158 aa)) are a coiled coil. 2 stretches are compositionally biased toward low complexity: residues 368 to 379 (SSAPTIPAASAS) and 395 to 407 (TSST…GTTP). The residue at position 499 (Arg-499) is an Asymmetric dimethylarginine. ANK repeat units lie at residues 710–740 (GRPT…DTNY), 744–773 (DGHS…QVNA), 777–806 (NGFT…DVNH), 810–839 (GGQT…DRSI), 843–872 (DGWT…PARG), and 913–943 (EGWT…EPEK). A disordered region spans residues 871–900 (RGNSSNEEEPESGAFARDGGEESSEGTSEP). Residues 1447–1483 (SKKKGESGAWRKVSTSPRKKSGRFSSPIWNEPDLSPG) are disordered. Ser-1525 carries the phosphoserine modification. Residues 1558–1664 (RTFHSSGSNP…KHEQVEKPNT (107 aa)) form a disordered region. Over residues 1587-1600 (PLSSHQATECSTSK) the composition is skewed to polar residues. Residues 1625–1639 (SQNTKRSSSSSNTRQ) are compositionally biased toward low complexity. Basic and acidic residues predominate over residues 1646–1664 (SKEENWNLHKHEQVEKPNT).

In terms of assembly, interacts with CTTN/cortactin SH3 domain. Interacts with STRN, STRN4/zinedin and MOB4/phocein; this interactions mediate the association with the STRIPAK core complex and may regulate dendritic spine distribution of the STRIPAK complex in hippocampal neurons. Activation of glutamate receptors weakens the interaction with STRN and STRN4.

The protein resides in the cytoplasm. It localises to the cell cortex. Its subcellular location is the cell projection. The protein localises to the dendritic spine. Regulates the dendritic spine distribution of CTTN/cortactin in hippocampal neurons, and thus controls dendritic spinogenesis and dendritic spine maintenance. Associates with the striatin-interacting phosphatase and kinase (STRIPAK) core complex to regulate dendritic spine distribution of the STRIPAK complex in hippocampal neurons. The protein is Cortactin-binding protein 2 (CTTNBP2) of Oryctolagus cuniculus (Rabbit).